We begin with the raw amino-acid sequence, 451 residues long: MAAQVEDDVANLKLDDSTTKPTNGTSQPDSKLSAEAEDSDDDAEGDGNGTGEAGADGAAKKKKKRKPRKKKKAGTSATAGAKSQTSPPRVLISDLFPNDSYPEGEICEYRDENSYRTTNEEKRHLDRMNNDFLTDYRKGAEIHRQVRQWAANWIKPGMTLTEIAEGIEDSVRALTGHQGLEEGDAQKAGMGFPTGLSINHCAAHYTPNAGNKVVVNYEDVMKVDFGVHINGRIVDSAFTKTFDPVYDPLVEACKAATNAGIKEAGIDVRMSDIGAAIQEVMESYEVEIGGKMLPVKCIRNLNGHSIGHYTIHGGKTVPIVKGSDQTKMEEGETFAIETFGSTGKGYVRDDMETSHYALRPDAPKVALRISSAKSLLASITKNFGTLPFCRRYLDRLGHDKYLLGLNNLVSSGIVEAYPPLCDIKGSWTAQSEHTFVLRPTCKEVLSRGDDY.

The segment at 1-97 (MAAQVEDDVA…PRVLISDLFP (97 aa)) is disordered. A compositionally biased stretch (polar residues) spans 19-28 (TKPTNGTSQP). Over residues 35 to 45 (EAEDSDDDAEG) the composition is skewed to acidic residues. A compositionally biased stretch (basic residues) spans 60–73 (KKKKKRKPRKKKKA). A compositionally biased stretch (low complexity) spans 74 to 83 (GTSATAGAKS). Residue histidine 204 participates in substrate binding. A divalent metal cation is bound by residues aspartate 224, aspartate 235, and histidine 304. A substrate-binding site is contributed by histidine 312. A divalent metal cation is bound by residues glutamate 337 and glutamate 432.

Belongs to the peptidase M24A family. Methionine aminopeptidase eukaryotic type 2 subfamily. Co(2+) is required as a cofactor. Zn(2+) serves as cofactor. Requires Mn(2+) as cofactor. The cofactor is Fe(2+).

The protein localises to the cytoplasm. The enzyme catalyses Release of N-terminal amino acids, preferentially methionine, from peptides and arylamides.. Cotranslationally removes the N-terminal methionine from nascent proteins. The N-terminal methionine is often cleaved when the second residue in the primary sequence is small and uncharged (Met-Ala-, Cys, Gly, Pro, Ser, Thr, or Val). The chain is Methionine aminopeptidase 2-2 from Leptosphaeria maculans (strain JN3 / isolate v23.1.3 / race Av1-4-5-6-7-8) (Blackleg fungus).